Here is a 1227-residue protein sequence, read N- to C-terminus: Methionine synthase (1227 aa).

The 324-residue stretch at 2-325 (SSKVEQLRAQ…EHIAAMSRAV (324 aa)) folds into the Hcy-binding domain. Zn(2+)-binding residues include C247, C310, and C311. Residues 356 to 617 (FVNVGERTNV…LPAELRDAVE (262 aa)) enclose the Pterin-binding domain. One can recognise a B12-binding N-terminal domain in the interval 650 to 744 (QQAEWRSWDV…FIEASKEKGS (95 aa)). Residues E694, 756–760 (GDVHD), H759, S804, T808, and A860 contribute to the methylcob(III)alamin site. A B12-binding domain is found at 746 to 881 (NGKMVIATVK…SDTQRDDFVA (136 aa)). Residues 897–1227 (KKPRTPPVTL…LAPNLGYDAD (331 aa)) form the AdoMet activation domain. Residues D946, R1134, and 1189-1190 (YF) each bind S-adenosyl-L-methionine.

It belongs to the vitamin-B12 dependent methionine synthase family. Requires methylcob(III)alamin as cofactor. Zn(2+) serves as cofactor.

The enzyme catalyses (6S)-5-methyl-5,6,7,8-tetrahydrofolate + L-homocysteine = (6S)-5,6,7,8-tetrahydrofolate + L-methionine. It participates in amino-acid biosynthesis; L-methionine biosynthesis via de novo pathway; L-methionine from L-homocysteine (MetH route): step 1/1. Functionally, catalyzes the transfer of a methyl group from methyl-cobalamin to homocysteine, yielding enzyme-bound cob(I)alamin and methionine. Subsequently, remethylates the cofactor using methyltetrahydrofolate. The sequence is that of Methionine synthase (metH) from Salmonella typhimurium (strain LT2 / SGSC1412 / ATCC 700720).